Reading from the N-terminus, the 290-residue chain is UPF0761 membrane protein ASA_4118 (290 aa).

A run of 6 helical transmembrane segments spans residues 48-68 (LLSL…FPVF), 104-124 (NTTA…ISAI), 144-164 (FAMY…SIAI), 182-202 (IGYL…FLLV), 216-236 (AFIG…GFAI), and 250-270 (ALAT…VVLL).

Belongs to the UPF0761 family.

The protein localises to the cell inner membrane. This is UPF0761 membrane protein ASA_4118 from Aeromonas salmonicida (strain A449).